A 471-amino-acid polypeptide reads, in one-letter code: Probable multidrug-efflux transporter MT1670 (471 aa).

The next 14 membrane-spanning stretches (helical) occupy residues 23 to 43 (IVLAGGVALYATNEFLTISLL), 55 to 75 (LYAWVTTLYLVGSVVAATTVN), 91 to 111 (LAVFGLASLVCAAAPSMQILV), 116 to 136 (LQGIAGGLLAGLGYALINSTL), 146 to 166 (ALVSAMWGVATLIGPATGGLF), 174 to 194 (WAFGVMTLLTALMAMLVPVAL), 213 to 233 (VPVWSLLLMGAAALAISVAAL), 237 to 257 (LVQTAGLLAAAALLVAVFVVV), 279 to 299 (IYLTMSVQMIAAMVDTYVPLF), 308 to 328 (PVAAGFLGAALAVGWTVGEVA), 337 to 357 (VIGHVVAAAPLVMASGLALGA), 366 to 386 (VGIIALWALALLIIGTGIGIA), 410 to 430 (AINVVQLISGAFGAGLAGVVV), and 438 to 458 (VAAARGLYMAFTVLAAAGVIA).

This sequence belongs to the major facilitator superfamily.

It localises to the cell membrane. In terms of biological role, could be involved in fluoroquinolones efflux. This Mycobacterium tuberculosis (strain CDC 1551 / Oshkosh) protein is Probable multidrug-efflux transporter MT1670.